A 308-amino-acid chain; its full sequence is Staphylococcal superantigen-like 4 (308 aa).

The N-terminal stretch at 1 to 30 (MKITTIAKTSLALGLLTTGVITTTTQAANA) is a signal peptide. The tract at residues 28–117 (ANATTPSSTK…TTKQVPTEIN (90 aa)) is disordered. Polar residues-rich tracts occupy residues 33-47 (PSST…TPPS) and 55-76 (SKPN…TANA). Low complexity predominate over residues 77–93 (TTPPSTKVTTPPSTNTP). Polar residues predominate over residues 94–114 (QPMQSTKSDTPQSPTTKQVPT). The segment at 180 to 278 (VDVFVVLEEN…VIKMKNGGKY (99 aa)) is sialyl Lewis X-binding.

This sequence belongs to the staphylococcal/streptococcal toxin family.

It is found in the secreted. In terms of biological role, secreted protein that plays a role in immune innate response inhibition by interfering with host TLR2-mediated pathway. The polypeptide is Staphylococcal superantigen-like 4 (Staphylococcus aureus (strain Newman)).